Here is a 28-residue protein sequence, read N- to C-terminus: Short cationic peptide-1a (28 aa).

Residue E28 is modified to Glutamic acid 1-amide.

As to expression, expressed by the venom gland.

It is found in the secreted. The chain is Short cationic peptide-1a from Cupiennius salei (American wandering spider).